Here is a 527-residue protein sequence, read N- to C-terminus: Bifunctional purine biosynthesis protein PurH (527 aa).

One can recognise an MGS-like domain in the interval 1–149 (MASDFLPVRR…KNFARVAVAT (149 aa)).

It belongs to the PurH family.

It catalyses the reaction (6R)-10-formyltetrahydrofolate + 5-amino-1-(5-phospho-beta-D-ribosyl)imidazole-4-carboxamide = 5-formamido-1-(5-phospho-D-ribosyl)imidazole-4-carboxamide + (6S)-5,6,7,8-tetrahydrofolate. It carries out the reaction IMP + H2O = 5-formamido-1-(5-phospho-D-ribosyl)imidazole-4-carboxamide. The protein operates within purine metabolism; IMP biosynthesis via de novo pathway; 5-formamido-1-(5-phospho-D-ribosyl)imidazole-4-carboxamide from 5-amino-1-(5-phospho-D-ribosyl)imidazole-4-carboxamide (10-formyl THF route): step 1/1. It functions in the pathway purine metabolism; IMP biosynthesis via de novo pathway; IMP from 5-formamido-1-(5-phospho-D-ribosyl)imidazole-4-carboxamide: step 1/1. This Xanthomonas oryzae pv. oryzae (strain PXO99A) protein is Bifunctional purine biosynthesis protein PurH.